Here is a 332-residue protein sequence, read N- to C-terminus: Cell division protein ZipA (332 aa).

Topologically, residues 1-6 (MMQDLR) are periplasmic. A helical transmembrane segment spans residues 7 to 27 (LILIVVGAIAIIALLLHGLWT). The Cytoplasmic portion of the chain corresponds to 28–332 (SRKERSSLFR…RLREVLENNA (305 aa)). 2 stretches are compositionally biased toward basic and acidic residues: residues 34-51 (SLFRDRPAKRSKKEREQS) and 61-72 (GEVRVRSAHPED). The disordered stretch occupies residues 34–184 (SLFRDRPAKR…PAVAHEPQPA (151 aa)). Residues 98-107 (PAPRAVQPAA) are compositionally biased toward low complexity. Acidic residues predominate over residues 121 to 136 (DDILLDNYAQEEDDEP). Low complexity predominate over residues 155–171 (PAAEPAFHAEPAHQPQP).

The protein belongs to the ZipA family. As to quaternary structure, interacts with FtsZ via their C-terminal domains.

The protein localises to the cell inner membrane. Functionally, essential cell division protein that stabilizes the FtsZ protofilaments by cross-linking them and that serves as a cytoplasmic membrane anchor for the Z ring. Also required for the recruitment to the septal ring of downstream cell division proteins. This Serratia proteamaculans (strain 568) protein is Cell division protein ZipA.